The following is a 494-amino-acid chain: Probable cytosol aminopeptidase (494 aa).

2 residues coordinate Mn(2+): Lys-260 and Asp-265. Lys-272 is a catalytic residue. The Mn(2+) site is built by Asp-283, Asp-342, and Glu-344. Residue Arg-346 is part of the active site.

This sequence belongs to the peptidase M17 family. Mn(2+) serves as cofactor.

The protein resides in the cytoplasm. The enzyme catalyses Release of an N-terminal amino acid, Xaa-|-Yaa-, in which Xaa is preferably Leu, but may be other amino acids including Pro although not Arg or Lys, and Yaa may be Pro. Amino acid amides and methyl esters are also readily hydrolyzed, but rates on arylamides are exceedingly low.. The catalysed reaction is Release of an N-terminal amino acid, preferentially leucine, but not glutamic or aspartic acids.. Its function is as follows. Presumably involved in the processing and regular turnover of intracellular proteins. Catalyzes the removal of unsubstituted N-terminal amino acids from various peptides. In Bacillus cereus (strain ATCC 10987 / NRS 248), this protein is Probable cytosol aminopeptidase.